A 531-amino-acid polypeptide reads, in one-letter code: CTP synthase (531 aa).

The amidoligase domain stretch occupies residues methionine 1 to leucine 267. CTP is bound at residue serine 13. Serine 13 serves as a coordination point for UTP. Serine 14–isoleucine 19 lines the ATP pocket. Residue tyrosine 54 participates in L-glutamine binding. Aspartate 71 contacts ATP. The Mg(2+) site is built by aspartate 71 and glutamate 141. CTP-binding positions include aspartate 148–glutamate 150, lysine 188–glutamine 193, and lysine 224. UTP-binding positions include lysine 188–glutamine 193 and lysine 224. Arginine 240–alanine 242 is a binding site for ATP. One can recognise a Glutamine amidotransferase type-1 domain in the interval lysine 292–glutamate 531. Glycine 354 is a binding site for L-glutamine. Cysteine 381 serves as the catalytic Nucleophile; for glutamine hydrolysis. L-glutamine is bound by residues leucine 382–glutamine 385, glutamate 405, and arginine 462. Active-site residues include histidine 507 and glutamate 509.

Belongs to the CTP synthase family. As to quaternary structure, homotetramer.

The enzyme catalyses UTP + L-glutamine + ATP + H2O = CTP + L-glutamate + ADP + phosphate + 2 H(+). It carries out the reaction L-glutamine + H2O = L-glutamate + NH4(+). The catalysed reaction is UTP + NH4(+) + ATP = CTP + ADP + phosphate + 2 H(+). It participates in pyrimidine metabolism; CTP biosynthesis via de novo pathway; CTP from UDP: step 2/2. Allosterically activated by GTP, when glutamine is the substrate; GTP has no effect on the reaction when ammonia is the substrate. The allosteric effector GTP functions by stabilizing the protein conformation that binds the tetrahedral intermediate(s) formed during glutamine hydrolysis. Inhibited by the product CTP, via allosteric rather than competitive inhibition. Its function is as follows. Catalyzes the ATP-dependent amination of UTP to CTP with either L-glutamine or ammonia as the source of nitrogen. Regulates intracellular CTP levels through interactions with the four ribonucleotide triphosphates. The protein is CTP synthase of Geobacillus kaustophilus (strain HTA426).